The sequence spans 204 residues: Urease accessory protein UreG (204 aa).

A GTP-binding site is contributed by 10 to 17; that stretch reads GPVGAGKT.

The protein belongs to the SIMIBI class G3E GTPase family. UreG subfamily. Homodimer. UreD, UreF and UreG form a complex that acts as a GTP-hydrolysis-dependent molecular chaperone, activating the urease apoprotein by helping to assemble the nickel containing metallocenter of UreC. The UreE protein probably delivers the nickel.

Its subcellular location is the cytoplasm. Facilitates the functional incorporation of the urease nickel metallocenter. This process requires GTP hydrolysis, probably effectuated by UreG. This is Urease accessory protein UreG from Bacillus sp. (strain TB-90).